We begin with the raw amino-acid sequence, 603 residues long: UvrABC system protein C (603 aa).

The 78-residue stretch at 15 to 92 (DQPGCYLMKD…IKKHDPRFNI (78 aa)) folds into the GIY-YIG domain. A UVR domain is found at 197-232 (KTVKNDLMKKMQEAAENMEFEKAGEFRDQINAIETT).

The protein belongs to the UvrC family. Interacts with UvrB in an incision complex.

The protein resides in the cytoplasm. The UvrABC repair system catalyzes the recognition and processing of DNA lesions. UvrC both incises the 5' and 3' sides of the lesion. The N-terminal half is responsible for the 3' incision and the C-terminal half is responsible for the 5' incision. This chain is UvrABC system protein C, found in Listeria monocytogenes serotype 4b (strain F2365).